Consider the following 309-residue polypeptide: Taste receptor type 2 member 31 (309 aa).

The Extracellular segment spans residues 1–2 (MT). The chain crosses the membrane as a helical span at residues 3 to 23 (TFLPIIFSSLVVVIFVIGNFA). Residues 24–55 (NGFIALVNSIEWFKXQKISFADQILTALAVSR) lie on the Cytoplasmic side of the membrane. Residues 56 to 76 (VGLLWVLLLNWYSTVLNPAFY) form a helical membrane-spanning segment. Residues 77 to 100 (SVEVRTTAYNVWAVTGHFSNWLAT) are Extracellular-facing. A helical membrane pass occupies residues 101–121 (SLSIFYLLKIANFSNFIFLHL). The Cytoplasmic segment spans residues 122-126 (KRRVK). The chain crosses the membrane as a helical span at residues 127 to 147 (SVILVMLLGPLLFLACQLFMI). At 148–181 (NMKEIVRTKEYEGNMTWKIKLRSAVYLSDATVTT) the chain is on the extracellular side. N-linked (GlcNAc...) asparagine glycosylation is present at asparagine 161. A helical membrane pass occupies residues 182 to 202 (LGNLVPFTLTLLCFLLLICSL). Topologically, residues 203–229 (CKHLKKMQLHGKGSQDPSTKVHIKVLQ) are cytoplasmic. Residues 230–250 (TVISFLLLCAIYFLSIMISVW) form a helical membrane-spanning segment. Residues 251 to 259 (SFGSLKNKP) are Extracellular-facing. Residues 260–280 (VFMFCKAIRFSYPSIHPFILI) traverse the membrane as a helical segment. Topologically, residues 281 to 309 (WGNKKLKQTFLSVLRQVRYWVKGEKPSSP) are cytoplasmic.

The protein belongs to the G-protein coupled receptor T2R family.

The protein localises to the membrane. Functionally, receptor that may play a role in the perception of bitterness and is gustducin-linked. May play a role in sensing the chemical composition of the gastrointestinal content. The activity of this receptor may stimulate alpha gustducin, mediate PLC-beta-2 activation and lead to the gating of TRPM5. The protein is Taste receptor type 2 member 31 (TAS2R31) of Pan paniscus (Pygmy chimpanzee).